Here is an 880-residue protein sequence, read N- to C-terminus: MTKQDQEMPTKYHPQDIESKWYEYWIEGKFFEATSDETKKPYTIVIPPPNVTGKLHLGHAWDTALQDILSRLKRMQGYDTLWLPGMDHAGIATQAKVEAKLREEGKSRYDLGREAFVEKTWEWKEEYADFIRQQWAKLGLSLDYSRERFTLDEGLSKAVREVFVKLYEKGLIYRGEYIINWDPVTKTALSDIEVIYKDVQGYFYHMKYPLADGDGAIEVATTRPETMLGDTAVAVHPEDERYQHLIGKMVKLPITGREIPIVADDYVDMEFGSGAVKITPAHDPNDFEIGNRHNLPRILVMNEDGTMNEKAGQYEGMDRFECRKQIVKDLQEQGVLFKIEEHVHSVGHSERSGAVVEPYLSTQWFVKMKPLAEQAIELQTTENKVNFVPDRFEKTYLRWMENIRDWCISRQLWWGHRIPAWYHKETGEVYVGHEAPQDIDNWKQDEDVLDTWFSSALWPFSTMGWPDEEAPDYKRYYSTDALVTGYDIIFFWVSRMIFQGLEFTGQPPFKDVLIHGLVRDAEGQKMSKSLGNGVDPMEVIDKYGADALRFFLATGSSPGNDLRFYWEKVESTWNFGNKIWNASRFALMNMDGMSYDEIDLTGEKSIADQWILTRLQETIETVTRLIDAYEFGEVGRHLYNFIWDDLCDWYIEMAKLPLYGEDEVAKKTTRSVLAYVLDQTMRLLHPLMPFITEEIWQHLPHEGESITVASWPVKSEEFTFEQAMGDMELLKDIIRSVRNTRAELNVPMSKEIELHIQAKNEDVLTQLERGKHYIEKFCNPSTLVMGTAIEKPEKSMSNVLSGVELYLPLAGLLDLEEEIARLEKEENKLEKEVERVQKKLSNQGFLAKAPEKVIEEERKKEADYLEKRAAVRARIKELKG.

Residues 49 to 59 carry the 'HIGH' region motif; sequence PNVTGKLHLGH. Positions 525 to 529 match the 'KMSKS' region motif; that stretch reads KMSKS. K528 provides a ligand contact to ATP. The stretch at 809–879 forms a coiled coil; it reads LAGLLDLEEE…AVRARIKELK (71 aa).

This sequence belongs to the class-I aminoacyl-tRNA synthetase family. ValS type 1 subfamily. As to quaternary structure, monomer.

It localises to the cytoplasm. The enzyme catalyses tRNA(Val) + L-valine + ATP = L-valyl-tRNA(Val) + AMP + diphosphate. In terms of biological role, catalyzes the attachment of valine to tRNA(Val). As ValRS can inadvertently accommodate and process structurally similar amino acids such as threonine, to avoid such errors, it has a 'posttransfer' editing activity that hydrolyzes mischarged Thr-tRNA(Val) in a tRNA-dependent manner. The polypeptide is Valine--tRNA ligase (Halalkalibacterium halodurans (strain ATCC BAA-125 / DSM 18197 / FERM 7344 / JCM 9153 / C-125) (Bacillus halodurans)).